A 608-amino-acid chain; its full sequence is Pentatricopeptide repeat-containing protein At5g40410, mitochondrial (608 aa).

The transit peptide at 1-28 (MIKANVYSCSKFRFLYRRRFLSQSSFVH) directs the protein to the mitochondrion. PPR repeat units lie at residues 30–64 (LDANVSSLIAAVKSCVSIELCRLLHCKVVKSVSYR), 65–95 (HGFIGDQLVGCYLRLGHDVCAEKLFDEMPER), 96–130 (DLVSWNSLISGYSGRGYLGKCFEVLSRMMISEVGF), 133–167 (NEVTFLSMISACVYGGSKEEGRCIHGLVMKFGVLE), 168–198 (EVKVVNAFINWYGKTGDLTSSCKLFEDLSIK), 199–233 (NLVSWNTMIVIHLQNGLAEKGLAYFNMSRRVGHEP), 234–268 (DQATFLAVLRSCEDMGVVRLAQGIHGLIMFGGFSG), 269–299 (NKCITTALLDLYSKLGRLEDSSTVFHEITSP), 300–334 (DSMAWTAMLAAYATHGFGRDAIKHFELMVHYGISP), 335–365 (DHVTFTHLLNACSHSGLVEEGKHYFETMSKR), and 371–401 (RLDHYSCMVDLLGRSGLLQDAYGLIKEMPME). The interval 406 to 481 (VWGALLGACR…ASGCSYIEHG (76 aa)) is type E motif. The tract at residues 482–512 (NKIHKFVVGDWSHPESEKIQKKLKEIRKKMK) is type E(+) motif. Residues 514–608 (EMGYKSKTEF…DGSCSCSDYW (95 aa)) form a type DYW motif region.

It belongs to the PPR family. PCMP-H subfamily.

The protein localises to the mitochondrion. This Arabidopsis thaliana (Mouse-ear cress) protein is Pentatricopeptide repeat-containing protein At5g40410, mitochondrial (PCMP-H15).